The following is a 948-amino-acid chain: UvrABC system protein A (948 aa).

Position 31–38 (31–38 (GLSGSGKS)) interacts with ATP. The C4-type zinc-finger motif lies at 249 to 277 (CPNGHDIGFTELSPRMFSFNSPYGACETC). ABC transporter domains lie at 307-586 (WAGS…KNSL) and 606-934 (GNGS…QYLK). Position 638–645 (638–645 (GVSGSGKS)) interacts with ATP. The C4-type zinc-finger motif lies at 737–763 (CETCEGDGILKIEMHFLPDVYVTCEVC).

The protein belongs to the ABC transporter superfamily. UvrA family. As to quaternary structure, forms a heterotetramer with UvrB during the search for lesions.

The protein localises to the cytoplasm. Functionally, the UvrABC repair system catalyzes the recognition and processing of DNA lesions. UvrA is an ATPase and a DNA-binding protein. A damage recognition complex composed of 2 UvrA and 2 UvrB subunits scans DNA for abnormalities. When the presence of a lesion has been verified by UvrB, the UvrA molecules dissociate. The sequence is that of UvrABC system protein A from Leptospira interrogans serogroup Icterohaemorrhagiae serovar copenhageni (strain Fiocruz L1-130).